We begin with the raw amino-acid sequence, 417 residues long: MLYLEDYLEMIEQLPMDLRDRFTEMREMDLQVQNAMDQLEQRVNEFFMNAKKNKPEWREEQMTSIKKDYYKALEDADEKVQLANQIYDLVDRHLRKLDQELAKFKMELEADNAGITEILERRSLELDTPSQPVNNHHAHSHTPVEKRKHNPSSHHGATDHVPEKKFKSEALLSTLTSDASKENTPGRRNNNSSSSSNNAYNTNSSQPLASYNLGSLSSGSGAGAITMAAAQAVQATAQMKEGRRTSSLKASYEAFKNNDFQLGREFSLSRDSTGYSSSALASTLTQTLSSSSTDSRSGRKSKNNNKSSSQQSSSSSSSSSLSSCSSSSALAQELSQQTAVIPESDSNSQVDWTYDPNEPRYCICNQVSYGEMVGCDNQDCPIEWFHYGCVGLTEAPKGKWYCPQCTAAMKRRGSRHK.

Disordered regions lie at residues 128–203 (TPSQ…YNTN) and 286–320 (QTLS…SSSS). The span at 136 to 152 (HHAHSHTPVEKRKHNPS) shows a compositional bias: basic residues. A compositionally biased stretch (basic and acidic residues) spans 156 to 168 (GATDHVPEKKFKS). Low complexity-rich tracts occupy residues 189 to 203 (NNNS…YNTN), 286 to 295 (QTLSSSSTDS), and 307 to 320 (SSSQ…SSSS). Residues 359–408 (PRYCICNQVSYGEMVGCDNQDCPIEWFHYGCVGLTEAPKGKWYCPQCTAA) form a PHD-type zinc finger. Zn(2+) is bound by residues C362, C364, C375, C380, H386, C389, C402, and C405.

It belongs to the ING family. In terms of assembly, interacts with H3K4me3 and to a lesser extent with H3K4me2. Component of the NuA4 histone acetyltransferase complex.

Its subcellular location is the nucleus. Its function is as follows. Component of the NuA4 histone acetyltransferase (HAT) complex which is involved in transcriptional activation of select genes principally by acetylation of nucleosomal histone H4 and H2A. This modification may both alter nucleosome - DNA interactions and promote interaction of the modified histones with other proteins which positively regulate transcription. NuA4 may also play a direct role in DNA repair when directly recruited to sites of DNA damage. This Gallus gallus (Chicken) protein is Inhibitor of growth protein 3 (ING3).